A 38-amino-acid polypeptide reads, in one-letter code: Putative defensin-like protein 105 (38 aa).

Disulfide bonds link cysteine 5-cysteine 27, cysteine 13-cysteine 33, and cysteine 17-cysteine 34.

This sequence belongs to the DEFL family.

This Arabidopsis thaliana (Mouse-ear cress) protein is Putative defensin-like protein 105.